Consider the following 453-residue polypeptide: Tubulin alpha-2 chain (453 aa).

Glutamine 11 serves as a coordination point for GTP. Lysine 40 is subject to N6-acetyllysine. Glutamate 71, glycine 144, threonine 145, threonine 179, asparagine 206, and asparagine 228 together coordinate GTP. A Mg(2+)-binding site is contributed by glutamate 71. Glutamate 254 is an active-site residue. The disordered stretch occupies residues 432–453; sequence YEEVGAETAEGEGEEEDFGEEY.

It belongs to the tubulin family. In terms of assembly, dimer of alpha and beta chains. A typical microtubule is a hollow water-filled tube with an outer diameter of 25 nm and an inner diameter of 15 nM. Alpha-beta heterodimers associate head-to-tail to form protofilaments running lengthwise along the microtubule wall with the beta-tubulin subunit facing the microtubule plus end conferring a structural polarity. Microtubules usually have 13 protofilaments but different protofilament numbers can be found in some organisms and specialized cells. Mg(2+) serves as cofactor. Undergoes a tyrosination/detyrosination cycle, the cyclic removal and re-addition of a C-terminal tyrosine residue by the enzymes tubulin tyrosine carboxypeptidase (TTCP) and tubulin tyrosine ligase (TTL), respectively. Post-translationally, acetylation of alpha chains at Lys-40 stabilizes microtubules and affects affinity and processivity of microtubule motors. This modification has a role in multiple cellular functions, ranging from cell motility, cell cycle progression or cell differentiation to intracellular trafficking and signaling.

It localises to the cytoplasm. The protein resides in the cytoskeleton. The catalysed reaction is GTP + H2O = GDP + phosphate + H(+). Functionally, tubulin is the major constituent of microtubules, a cylinder consisting of laterally associated linear protofilaments composed of alpha- and beta-tubulin heterodimers. Microtubules grow by the addition of GTP-tubulin dimers to the microtubule end, where a stabilizing cap forms. Below the cap, tubulin dimers are in GDP-bound state, owing to GTPase activity of alpha-tubulin. This chain is Tubulin alpha-2 chain (TUBA2), found in Pelvetia fastigiata (Brown alga).